We begin with the raw amino-acid sequence, 368 residues long: Protein-glutamate methylesterase/protein-glutamine glutaminase (368 aa).

In terms of domain architecture, Response regulatory spans 9 to 126; the sequence is KVLVVDDSAF…SINMKELKDE (118 aa). Residue D60 is modified to 4-aspartylphosphate. A CheB-type methylesterase domain is found at 161 to 354; that stretch reads SVPARIAVAI…ETVVKAVEII (194 aa). Active-site residues include S173, H200, and D296.

This sequence belongs to the CheB family. Post-translationally, phosphorylated by CheA. Phosphorylation of the N-terminal regulatory domain activates the methylesterase activity.

The protein resides in the cytoplasm. It carries out the reaction [protein]-L-glutamate 5-O-methyl ester + H2O = L-glutamyl-[protein] + methanol + H(+). The catalysed reaction is L-glutaminyl-[protein] + H2O = L-glutamyl-[protein] + NH4(+). Functionally, involved in chemotaxis. Part of a chemotaxis signal transduction system that modulates chemotaxis in response to various stimuli. Catalyzes the demethylation of specific methylglutamate residues introduced into the chemoreceptors (methyl-accepting chemotaxis proteins or MCP) by CheR. Also mediates the irreversible deamidation of specific glutamine residues to glutamic acid. The chain is Protein-glutamate methylesterase/protein-glutamine glutaminase from Pyrococcus horikoshii (strain ATCC 700860 / DSM 12428 / JCM 9974 / NBRC 100139 / OT-3).